Reading from the N-terminus, the 878-residue chain is von Willebrand factor A domain-containing protein DDB_G0267758 (878 aa).

Positions 36–169 constitute a VIT domain; that stretch reads GLFLTENNKK…TVKITLTITS (134 aa). Residues 316 to 496 form the VWFA domain; the sequence is EFIFLIDCSG…ISLKPMFSNI (181 aa). The segment covering 595–623 has biased composition (low complexity); that stretch reads SSSSSSSSSSSSSSSSSSSSSSSSSSSSS. Disordered stretches follow at residues 595-638 and 752-774; these read SSSS…HRLS and SVKK…SKTK. A compositionally biased stretch (polar residues) spans 624-635; it reads TTTATTNQNQIH.

This is von Willebrand factor A domain-containing protein DDB_G0267758 from Dictyostelium discoideum (Social amoeba).